We begin with the raw amino-acid sequence, 379 residues long: Cytochrome b (379 aa).

A run of 4 helical transmembrane segments spans residues 33-53, 77-98, 113-133, and 178-198; these read FGSL…FLAM, WLIR…FIHV, WNIG…GYVL, and FFAF…VHLL. Heme b is bound by residues histidine 83 and histidine 97. Heme b is bound by residues histidine 182 and histidine 196. Residue histidine 201 participates in a ubiquinone binding. The next 4 membrane-spanning stretches (helical) occupy residues 226–246, 288–308, 320–340, and 347–367; these read IKDL…TLFF, LGGV…PLLN, VTQV…WIGG, and FTMI…ILIP.

The protein belongs to the cytochrome b family. In terms of assembly, the cytochrome bc1 complex contains 11 subunits: 3 respiratory subunits (MT-CYB, CYC1 and UQCRFS1), 2 core proteins (UQCRC1 and UQCRC2) and 6 low-molecular weight proteins (UQCRH/QCR6, UQCRB/QCR7, UQCRQ/QCR8, UQCR10/QCR9, UQCR11/QCR10 and a cleavage product of UQCRFS1). This cytochrome bc1 complex then forms a dimer. The cofactor is heme b.

Its subcellular location is the mitochondrion inner membrane. Its function is as follows. Component of the ubiquinol-cytochrome c reductase complex (complex III or cytochrome b-c1 complex) that is part of the mitochondrial respiratory chain. The b-c1 complex mediates electron transfer from ubiquinol to cytochrome c. Contributes to the generation of a proton gradient across the mitochondrial membrane that is then used for ATP synthesis. The sequence is that of Cytochrome b (MT-CYB) from Akodon subfuscus (Puno grass mouse).